The following is a 436-amino-acid chain: Xylose isomerase (436 aa).

Catalysis depends on residues H100 and D103. Mg(2+) is bound by residues E231, E267, H270, D295, D306, D308, and D338.

The protein belongs to the xylose isomerase family. In terms of assembly, homotetramer. It depends on Mg(2+) as a cofactor.

It localises to the cytoplasm. The catalysed reaction is alpha-D-xylose = alpha-D-xylulofuranose. This Chelativorans sp. (strain BNC1) protein is Xylose isomerase.